Reading from the N-terminus, the 338-residue chain is Nicotinate-nucleotide--dimethylbenzimidazole phosphoribosyltransferase (338 aa).

Glu305 (proton acceptor) is an active-site residue.

Belongs to the CobT family.

It carries out the reaction 5,6-dimethylbenzimidazole + nicotinate beta-D-ribonucleotide = alpha-ribazole 5'-phosphate + nicotinate + H(+). Its pathway is nucleoside biosynthesis; alpha-ribazole biosynthesis; alpha-ribazole from 5,6-dimethylbenzimidazole: step 1/2. Functionally, catalyzes the synthesis of alpha-ribazole-5'-phosphate from nicotinate mononucleotide (NAMN) and 5,6-dimethylbenzimidazole (DMB). The polypeptide is Nicotinate-nucleotide--dimethylbenzimidazole phosphoribosyltransferase (Sinorhizobium fredii (strain NBRC 101917 / NGR234)).